We begin with the raw amino-acid sequence, 151 residues long: Probable ribonuclease P/MRP protein subunit POP5 (151 aa).

Belongs to the eukaryotic/archaeal RNase P protein component 2 family. Component of nuclear RNase P and RNase MRP ribonucleoproteins. Interacts with GAF1/RPP30.

It is found in the nucleus. Its subcellular location is the nucleolus. Essential protein required during embryogenesis. Component of ribonuclease P, a protein complex that generates mature tRNA molecules by cleaving their 5'-ends. Also a component of RNase MRP. This is Probable ribonuclease P/MRP protein subunit POP5 (EMB1687) from Arabidopsis thaliana (Mouse-ear cress).